We begin with the raw amino-acid sequence, 184 residues long: Large ribosomal subunit protein eL14 (184 aa).

A disordered region spans residues 149 to 184 (KNAKKVDSTPAAKKRIEKARAARKAKPTAAKEKSKK). Residues 160-174 (AKKRIEKARAARKAK) are compositionally biased toward basic residues.

Belongs to the eukaryotic ribosomal protein eL14 family.

The protein is Large ribosomal subunit protein eL14 of Trypanosoma congolense.